A 534-amino-acid polypeptide reads, in one-letter code: GMP synthase [glutamine-hydrolyzing] (534 aa).

Positions 20–210 (MLIILDFGSQ…VYHICDCEPT (191 aa)) constitute a Glutamine amidotransferase type-1 domain. Cysteine 97 (nucleophile) is an active-site residue. Residues histidine 184 and glutamate 186 contribute to the active site. Residues 211–409 (WTTETFVEEA…LGLPEEIVKR (199 aa)) enclose the GMPS ATP-PPase domain. An ATP-binding site is contributed by 238-244 (SGGVDSS).

Homodimer.

It catalyses the reaction XMP + L-glutamine + ATP + H2O = GMP + L-glutamate + AMP + diphosphate + 2 H(+). It participates in purine metabolism; GMP biosynthesis; GMP from XMP (L-Gln route): step 1/1. Functionally, catalyzes the synthesis of GMP from XMP. This is GMP synthase [glutamine-hydrolyzing] from Synechococcus sp. (strain ATCC 27144 / PCC 6301 / SAUG 1402/1) (Anacystis nidulans).